We begin with the raw amino-acid sequence, 92 residues long: cAMP-dependent protein kinase inhibitor beta (92 aa).

Positions 1-26 (MGGGTSPEAQQDSVMRTDSSEMTDVE) are disordered. The segment covering 7-26 (PEAQQDSVMRTDSSEMTDVE) has biased composition (polar residues). S56 carries the phosphoserine modification. Positions 70–82 (EDAKTKNEEKDQG) are enriched in basic and acidic residues. The tract at residues 70-92 (EDAKTKNEEKDQGQPKTPLNEGK) is disordered.

It belongs to the PKI family.

Functionally, extremely potent competitive inhibitor of cAMP-dependent protein kinase activity, this protein interacts with the catalytic subunit of the enzyme after the cAMP-induced dissociation of its regulatory chains. The protein is cAMP-dependent protein kinase inhibitor beta (Pkib) of Mus musculus (Mouse).